The sequence spans 435 residues: GTPase Der (435 aa).

EngA-type G domains are found at residues 8–169 and 176–351; these read NLVA…NFEN and FKIA…NNLS. GTP is bound by residues 14–21, 61–65, 123–126, 182–189, 229–233, and 294–297; these read GKPNVGKS, DTGGI, NKLD, GKPNAGKS, DTAGI, and NKWD. The region spanning 352–435 is the KH-like domain; it reads REIKQNLLND…PINLVLKKNK (84 aa).

It belongs to the TRAFAC class TrmE-Era-EngA-EngB-Septin-like GTPase superfamily. EngA (Der) GTPase family. As to quaternary structure, associates with the 50S ribosomal subunit.

In terms of biological role, GTPase that plays an essential role in the late steps of ribosome biogenesis. The sequence is that of GTPase Der from Mycoplasmopsis pulmonis (strain UAB CTIP) (Mycoplasma pulmonis).